The primary structure comprises 83 residues: Beta-defensin 119 (83 aa).

The signal sequence occupies residues 1-20 (MKFLFLFLAILLAMEPVVSG). 3 disulfide bridges follow: Cys-27/Cys-54, Cys-34/Cys-48, and Cys-38/Cys-55.

This sequence belongs to the beta-defensin family.

It localises to the secreted. Functionally, has antibacterial activity. This Bos taurus (Bovine) protein is Beta-defensin 119 (DEFB119).